We begin with the raw amino-acid sequence, 523 residues long: Leucine-rich repeat-containing protein 27 (523 aa).

A disordered region spans residues 1-26 (MEDTSPQAVAEKAAKDPKAAKDLKDD). The segment covering 12 to 26 (KAAKDPKAAKDLKDD) has biased composition (basic and acidic residues). 5 LRR repeats span residues 55-76 (SSPV…FKIP), 77-98 (NLQQ…FFQL), 101-122 (NLTW…IGSH), 124-145 (HLKT…LGQV), and 147-168 (TLTA…IVQK). 2 disordered regions span residues 206-236 (QYPV…ADFF) and 372-394 (REQT…HSNM). 2 stretches are compositionally biased toward basic and acidic residues: residues 227–236 (DQEKEKADFF) and 372–385 (REQT…RELS). Coiled coils occupy residues 335–374 (VHAN…WREQ) and 463–494 (MQDI…TLNK). The segment at 503-523 (GNLSLHPPASQPQNIFFNTKS) is disordered. The span at 513–523 (QPQNIFFNTKS) shows a compositional bias: polar residues.

The sequence is that of Leucine-rich repeat-containing protein 27 (Lrrc27) from Mus musculus (Mouse).